Reading from the N-terminus, the 335-residue chain is G-protein coupled receptor 157 (335 aa).

Residues Met1–Arg15 lie on the Extracellular side of the membrane. A helical membrane pass occupies residues Ala16–His36. Topologically, residues Ala37 to Arg48 are cytoplasmic. A helical transmembrane segment spans residues Leu49–Leu69. Topologically, residues Gln70 to Thr87 are extracellular. The chain crosses the membrane as a helical span at residues Phe88 to Ile108. Residues Val109–Arg119 are Cytoplasmic-facing. The chain crosses the membrane as a helical span at residues Leu120 to Val140. Residues Ala141–His166 lie on the Extracellular side of the membrane. A helical transmembrane segment spans residues Val167–Leu187. Over Leu188 to Lys226 the chain is Cytoplasmic. A helical membrane pass occupies residues Leu227–Leu247. The Extracellular portion of the chain corresponds to Thr248 to Pro258. The helical transmembrane segment at Val259–Phe279 threads the bilayer. The Cytoplasmic segment spans residues Val280–Thr335. Residues Ser300–Thr335 are disordered. Residues Gly320–Thr335 show a composition bias toward polar residues.

It belongs to the G-protein coupled receptor 2 family.

The protein localises to the cell projection. The protein resides in the cilium membrane. In terms of biological role, orphan receptor that promotes neuronal differentiation of radial glial progenitors (RGPs). The activity of this receptor is mediated by a G(q)-protein that activates a phosphatidylinositol-calcium second messenger. This is G-protein coupled receptor 157 (GPR157) from Homo sapiens (Human).